A 168-amino-acid polypeptide reads, in one-letter code: Protein archease (168 aa).

A2 carries the N-acetylalanine modification. Ca(2+) contacts are provided by D39, D167, and I168.

It belongs to the archease family. As to quaternary structure, component of the tRNA-splicing ligase complex.

Functionally, component of the tRNA-splicing ligase complex required to facilitate the enzymatic turnover of catalytic subunit RTCB. Together with DDX1, acts by facilitating the guanylylation of RTCB, a key intermediate step in tRNA ligation. This Mus musculus (Mouse) protein is Protein archease (Zbtb8os).